The sequence spans 491 residues: Glutamyl-tRNA(Gln) amidotransferase subunit A (491 aa).

Active-site charge relay system residues include Lys80 and Ser155. The Acyl-ester intermediate role is filled by Ser179.

It belongs to the amidase family. GatA subfamily. In terms of assembly, heterotrimer of A, B and C subunits.

The catalysed reaction is L-glutamyl-tRNA(Gln) + L-glutamine + ATP + H2O = L-glutaminyl-tRNA(Gln) + L-glutamate + ADP + phosphate + H(+). Its function is as follows. Allows the formation of correctly charged Gln-tRNA(Gln) through the transamidation of misacylated Glu-tRNA(Gln) in organisms which lack glutaminyl-tRNA synthetase. The reaction takes place in the presence of glutamine and ATP through an activated gamma-phospho-Glu-tRNA(Gln). This Salinispora tropica (strain ATCC BAA-916 / DSM 44818 / JCM 13857 / NBRC 105044 / CNB-440) protein is Glutamyl-tRNA(Gln) amidotransferase subunit A.